The primary structure comprises 447 residues: Neuraminidase (447 aa).

Residues 1–6 (MNPNQK) lie on the Intravirion side of the membrane. Residues 7–27 (IITIGSICMGIGIISLILQIG) traverse the membrane as a helical segment. The tract at residues 11–33 (GSICMGIGIISLILQIGNIISMW) is involved in apical transport and lipid raft association. The Virion surface segment spans residues 28–447 (NIISMWVSHS…GAELPFTIDK (420 aa)). The interval 36–68 (HSIQTENQNHHEACNPSIAGQDAASVALAGNSS) is hypervariable stalk region. N-linked (GlcNAc...) asparagine; by host glycosylation occurs at N66. The head of neuraminidase stretch occupies residues 69–447 (LCPISGWAIY…GAELPFTIDK (379 aa)). Intrachain disulfides connect C70-C395, C102-C107, C162-C209, C211-C216, C257-C270, C259-C268, C296-C313, and C399-C424. R96 is a substrate binding site. An N-linked (GlcNAc...) asparagine; by host glycan is attached at N124. The active-site Proton donor/acceptor is the D129. R130 is a substrate binding site. N213 is a glycosylation site (N-linked (GlcNAc...) asparagine; by host). Residue 255 to 256 (EE) participates in substrate binding. Substrate is bound at residue R271. D272, G276, and D302 together coordinate Ca(2+). R346 provides a ligand contact to substrate. Residue Y380 is the Nucleophile of the active site.

Belongs to the glycosyl hydrolase 34 family. In terms of assembly, homotetramer. Ca(2+) is required as a cofactor. In terms of processing, N-glycosylated.

It is found in the virion membrane. The protein resides in the host apical cell membrane. The catalysed reaction is Hydrolysis of alpha-(2-&gt;3)-, alpha-(2-&gt;6)-, alpha-(2-&gt;8)- glycosidic linkages of terminal sialic acid residues in oligosaccharides, glycoproteins, glycolipids, colominic acid and synthetic substrates.. Inhibited by the neuraminidase inhibitors zanamivir (Relenza) and oseltamivir (Tamiflu). These drugs interfere with the release of progeny virus from infected cells and are effective against all influenza strains. Resistance to neuraminidase inhibitors is quite rare. Catalyzes the removal of terminal sialic acid residues from viral and cellular glycoconjugates. Cleaves off the terminal sialic acids on the glycosylated HA during virus budding to facilitate virus release. Additionally helps virus spread through the circulation by further removing sialic acids from the cell surface. These cleavages prevent self-aggregation and ensure the efficient spread of the progeny virus from cell to cell. Otherwise, infection would be limited to one round of replication. Described as a receptor-destroying enzyme because it cleaves a terminal sialic acid from the cellular receptors. May facilitate viral invasion of the upper airways by cleaving the sialic acid moieties on the mucin of the airway epithelial cells. Likely to plays a role in the budding process through its association with lipid rafts during intracellular transport. May additionally display a raft-association independent effect on budding. Plays a role in the determination of host range restriction on replication and virulence. Sialidase activity in late endosome/lysosome traffic seems to enhance virus replication. The polypeptide is Neuraminidase (Aves).